The primary structure comprises 105 residues: Sec-independent protein translocase protein TatA (105 aa).

Residues 1–21 (MSLGPWEIGIIVLLIIVLFGA) form a helical membrane-spanning segment. Residues 41–50 (EVKEMNKDGD) are compositionally biased toward basic and acidic residues. The segment at 41–105 (EVKEMNKDGD…QNYEDPNRTS (65 aa)) is disordered. A compositionally biased stretch (low complexity) spans 52 to 92 (PEQQQQPQQQIAPNQIEAPQPNFEQHYQGQQVQQPQNPQTP). Residues 96–105 (QNYEDPNRTS) show a composition bias toward basic and acidic residues.

This sequence belongs to the TatA/E family. As to quaternary structure, the Tat system comprises two distinct complexes: a TatABC complex, containing multiple copies of TatA, TatB and TatC subunits, and a separate TatA complex, containing only TatA subunits. Substrates initially bind to the TatABC complex, which probably triggers association of the separate TatA complex to form the active translocon.

Its subcellular location is the cell membrane. Its function is as follows. Part of the twin-arginine translocation (Tat) system that transports large folded proteins containing a characteristic twin-arginine motif in their signal peptide across membranes. TatA could form the protein-conducting channel of the Tat system. The chain is Sec-independent protein translocase protein TatA from Corynebacterium glutamicum (strain ATCC 13032 / DSM 20300 / JCM 1318 / BCRC 11384 / CCUG 27702 / LMG 3730 / NBRC 12168 / NCIMB 10025 / NRRL B-2784 / 534).